A 123-amino-acid polypeptide reads, in one-letter code: Large ribosomal subunit protein uL18 (123 aa).

The protein belongs to the universal ribosomal protein uL18 family. In terms of assembly, part of the 50S ribosomal subunit; part of the 5S rRNA/L5/L18/L25 subcomplex. Contacts the 5S and 23S rRNAs.

Its function is as follows. This is one of the proteins that bind and probably mediate the attachment of the 5S RNA into the large ribosomal subunit, where it forms part of the central protuberance. This is Large ribosomal subunit protein uL18 from Wolbachia sp. subsp. Brugia malayi (strain TRS).